Reading from the N-terminus, the 459-residue chain is Hepatocyte nuclear factor 3-beta (459 aa).

The transactivation domain 1 stretch occupies residues 14–93 (DWSSYYAEPE…AGAMAGMSGS (80 aa)). The Nuclear localization signal signature appears at 106-113 (LSPSLSPL). Threonine 156 is modified (phosphothreonine). Residues 159–252 (KPPYSYISLI…FENGCYLRRQ (94 aa)) constitute a DNA-binding region (fork-head). Serine 212 bears the Phosphoserine mark. The segment covering 268–281 (GAASSGGKKTAPGS) has biased composition (low complexity). A disordered region spans residues 268 to 366 (GAASSGGKKT…PGLPPEAHLK (99 aa)). Serine 284 is modified (phosphoserine). Over residues 295 to 311 (ASETPAGTESPHSSASP) the composition is skewed to polar residues. Threonine 302 carries the phosphothreonine modification. A phosphoserine mark is found at serine 304, serine 307, serine 308, and serine 310. Residues 340-353 (PGQQQQAAAHLLGP) show a composition bias toward low complexity. Residues 362–459 (EAHLKPEHHY…VYSRPIMNSS (98 aa)) are transactivation domain 2. Phosphoserine occurs at positions 438 and 459.

As to quaternary structure, binds DNA as a monomer. Binds TLE1. Interacts with FOXA1 and FOXA3. Interacts with PRKDC. Interacts with AKT1. Interacts with TET1; this interaction may recruit TET1 to specific genomic loci to mediate their demethylation. Phosphorylation on Thr-156 abolishes binding to target promoters and subsequent transcription activation upon insulin stimulation. In terms of tissue distribution, restricted mainly to endoderm-derived tissues (lung, liver, stomach, and small intestine). Expressed in epididymis with region-specific expression pattern: no expression is observed in initial segment, low expression in proximal caput, gradiently higher levels of expression in middle and distal caput and highest level in corpus and cauda (at protein level).

It is found in the nucleus. Its subcellular location is the cytoplasm. Functionally, transcription factor that is involved in embryonic development, establishment of tissue-specific gene expression and regulation of gene expression in differentiated tissues. Is thought to act as a 'pioneer' factor opening the compacted chromatin for other proteins through interactions with nucleosomal core histones and thereby replacing linker histones at target enhancer and/or promoter sites. Binds DNA with the consensus sequence 5'-[AC]A[AT]T[AG]TT[GT][AG][CT]T[CT]-3'. In embryonic development is required for notochord formation. Involved in the development of multiple endoderm-derived organ systems such as the liver, pancreas and lungs; Foxa1 and Foxa2 seem to have at least in part redundant roles. FOXA1 and FOXA2 are essential for hepatic specification. FOXA1 and FOXA2 are required for morphogenesis and cell differentiation during formation of the lung. FOXA1 and FOXA2 are involved in bile duct formation; they positively regulate the binding glucocorticoid receptor/NR3C1 to the IL6 promoter. FOXA1 and FOXA2 regulate multiple phases of midbrain dopaminergic neuron development; they regulate expression of NEUROG2 at the beginning of mDA neurogenesis and of NR4A2 and EN1 in immature mDA neurons. Modulates the transcriptional activity of nuclear hormone receptors; inhibits AR-mediated transcription from the LCN5 promoter. Binds to fibrinogen beta promoter and is involved in IL6-induced fibrinogen beta transcriptional activation. Originally described as a transcription activator for a number of liver genes such as AFP, albumin, tyrosine aminotransferase, PEPCK, etc. Interacts with the cis-acting regulatory regions of these genes. Involved in glucose homeostasis; regulates the expression of genes important for glucose sensing in pancreatic beta-cells and glucose homeostasis. In pancreatic beta cells activates transcription of potassium channel subunits KCNJ11 and ABCC8. Involved in regulation of fat metabolism; activates transcriptional programs of lipid metabolism and ketogenesis at low insulin state. Involved in transcriptional regulation of MUC2 in the intestine. This Mus musculus (Mouse) protein is Hepatocyte nuclear factor 3-beta (Foxa2).